We begin with the raw amino-acid sequence, 100 residues long: Urease subunit gamma (100 aa).

The protein belongs to the urease gamma subunit family. As to quaternary structure, heterotrimer of UreA (gamma), UreB (beta) and UreC (alpha) subunits. Three heterotrimers associate to form the active enzyme.

Its subcellular location is the cytoplasm. It catalyses the reaction urea + 2 H2O + H(+) = hydrogencarbonate + 2 NH4(+). Its pathway is nitrogen metabolism; urea degradation; CO(2) and NH(3) from urea (urease route): step 1/1. This Edwardsiella ictaluri (strain 93-146) protein is Urease subunit gamma.